The primary structure comprises 323 residues: Cyclin-D5-1 (323 aa).

Disordered stretches follow at residues 17–36 and 281–323; these read ESSLNEDDDETIERSDKQEP and HMTP…MRRL.

The protein belongs to the cyclin family. Cyclin D subfamily.

This chain is Cyclin-D5-1 (CYCD5-1), found in Arabidopsis thaliana (Mouse-ear cress).